A 436-amino-acid polypeptide reads, in one-letter code: Phosphoribosylamine--glycine ligase (436 aa).

The ATP-grasp domain occupies 106 to 318 (RKLFEDYRIP…MLEICEGIVD (213 aa)). Residue 133–196 (MEDFDSEAVV…EERVVGEEFT (64 aa)) coordinates ATP. Gln-276, Glu-288, and Asn-290 together coordinate Mg(2+). Positions 276, 288, and 290 each coordinate Mn(2+).

It belongs to the GARS family. Mg(2+) is required as a cofactor. Mn(2+) serves as cofactor.

It catalyses the reaction 5-phospho-beta-D-ribosylamine + glycine + ATP = N(1)-(5-phospho-beta-D-ribosyl)glycinamide + ADP + phosphate + H(+). The protein operates within purine metabolism; IMP biosynthesis via de novo pathway; N(1)-(5-phospho-D-ribosyl)glycinamide from 5-phospho-alpha-D-ribose 1-diphosphate: step 2/2. The sequence is that of Phosphoribosylamine--glycine ligase from Methanothermobacter thermautotrophicus (strain ATCC 29096 / DSM 1053 / JCM 10044 / NBRC 100330 / Delta H) (Methanobacterium thermoautotrophicum).